A 180-amino-acid polypeptide reads, in one-letter code: Large ribosomal subunit protein uL5c (180 aa).

Belongs to the universal ribosomal protein uL5 family. As to quaternary structure, part of the 50S ribosomal subunit; contacts the 5S rRNA.

The protein resides in the plastid. Its subcellular location is the chloroplast. Binds 5S rRNA, forms part of the central protuberance of the 50S subunit. The polypeptide is Large ribosomal subunit protein uL5c (rpl5) (Tetradesmus obliquus (Green alga)).